Reading from the N-terminus, the 181-residue chain is Oligoribonuclease (181 aa).

The 164-residue stretch at 8–171 (LIWIDLEMTG…QDIQESIAEL (164 aa)) folds into the Exonuclease domain. The active site involves Tyr129.

The protein belongs to the oligoribonuclease family.

It is found in the cytoplasm. Functionally, 3'-to-5' exoribonuclease specific for small oligoribonucleotides. This is Oligoribonuclease from Shewanella putrefaciens (strain CN-32 / ATCC BAA-453).